Here is a 321-residue protein sequence, read N- to C-terminus: DNA repair and recombination protein RadA (321 aa).

ATP is bound at residue 111-118 (GEFGSGKT).

It belongs to the eukaryotic RecA-like protein family.

Involved in DNA repair and in homologous recombination. Binds and assemble on single-stranded DNA to form a nucleoprotein filament. Hydrolyzes ATP in a ssDNA-dependent manner and promotes DNA strand exchange between homologous DNA molecules. The polypeptide is DNA repair and recombination protein RadA (Sulfolobus acidocaldarius (strain ATCC 33909 / DSM 639 / JCM 8929 / NBRC 15157 / NCIMB 11770)).